Here is a 203-residue protein sequence, read N- to C-terminus: Holliday junction branch migration complex subunit RuvA (203 aa).

The interval 1–64 (MIGRLRGIIL…EDAQLLYGFN (64 aa)) is domain I. A domain II region spans residues 65–142 (NKQERTLFKE…KGLHGDLFTP (78 aa)). Positions 143 to 154 (AVDLVLTSPASP) are flexible linker. The interval 155–203 (GSEDAEQEAVAALVALGYKPQEASRMVSKIARPDASSETLIRDALRAAL) is domain III.

The protein belongs to the RuvA family. In terms of assembly, homotetramer. Forms an RuvA(8)-RuvB(12)-Holliday junction (HJ) complex. HJ DNA is sandwiched between 2 RuvA tetramers; dsDNA enters through RuvA and exits via RuvB. An RuvB hexamer assembles on each DNA strand where it exits the tetramer. Each RuvB hexamer is contacted by two RuvA subunits (via domain III) on 2 adjacent RuvB subunits; this complex drives branch migration. In the full resolvosome a probable DNA-RuvA(4)-RuvB(12)-RuvC(2) complex forms which resolves the HJ.

The protein resides in the cytoplasm. In terms of biological role, the RuvA-RuvB-RuvC complex processes Holliday junction (HJ) DNA during genetic recombination and DNA repair, while the RuvA-RuvB complex plays an important role in the rescue of blocked DNA replication forks via replication fork reversal (RFR). RuvA specifically binds to HJ cruciform DNA, conferring on it an open structure. The RuvB hexamer acts as an ATP-dependent pump, pulling dsDNA into and through the RuvAB complex. HJ branch migration allows RuvC to scan DNA until it finds its consensus sequence, where it cleaves and resolves the cruciform DNA. The polypeptide is Holliday junction branch migration complex subunit RuvA (Salmonella schwarzengrund (strain CVM19633)).